The primary structure comprises 142 residues: Small ribosomal subunit protein bS6 (142 aa).

The interval 103–142 (KAAESREQRAPRGEDRPARVVADDVDDSDDDTDDEDSNDE) is disordered. The span at 105–124 (AESREQRAPRGEDRPARVVA) shows a compositional bias: basic and acidic residues. Residues 125 to 142 (DDVDDSDDDTDDEDSNDE) are compositionally biased toward acidic residues.

The protein belongs to the bacterial ribosomal protein bS6 family.

Its function is as follows. Binds together with bS18 to 16S ribosomal RNA. This is Small ribosomal subunit protein bS6 from Hahella chejuensis (strain KCTC 2396).